The following is a 137-amino-acid chain: Ciliary microtubule inner protein 1 (137 aa).

In terms of tissue distribution, expressed in airway epithelial cells, renal tubular cells, pancreatic acinar cells and epithelial cells of the stomach, duodenum, and gallbladder (at protein level).

Its subcellular location is the cell projection. The protein localises to the cilium. The sequence is that of Ciliary microtubule inner protein 1 from Homo sapiens (Human).